Consider the following 570-residue polypeptide: Ferroportin (570 aa).

Residues 1-23 (MTKSRDQTHQEGCCGSLANYLTS) are Cytoplasmic-facing. The chain crosses the membrane as a helical span at residues 24 to 53 (AKFLLYLGHSLSTWGDRMWHFAVSVFLVEL). Residues aspartate 39 and histidine 43 each contribute to the Fe cation site. Residues 54–57 (YGNS) lie on the Extracellular side of the membrane. Residues 58–84 (LLLTAVYGLVVAGSVLVLGAIIGDWVD) form a helical membrane-spanning segment. The Cytoplasmic portion of the chain corresponds to 85 to 87 (KNA). The chain crosses the membrane as a helical span at residues 88 to 118 (RLKVAQTSLVVQNVSVILCGIILMMVFLHKN). The Extracellular portion of the chain corresponds to 119–126 (ELLNMYHG). A helical membrane pass occupies residues 127 to 162 (WVLTVCYILIITIANIANLASTATAITIQRDWIVVV). Over 163–164 (AG) the chain is Cytoplasmic. Residues 165 to 195 (ENRSRLADMNATIRRIDQLTNILAPMAVGQI) traverse the membrane as a helical segment. At 196–202 (MTFGSPV) the chain is on the extracellular side. A helical transmembrane segment spans residues 203–229 (IGCGFISGWNLVSMCVEYFLLWKVYQK). Topologically, residues 230–306 (TPALAVKAAL…DGWVSYYNQP (77 aa)) are cytoplasmic. The chain crosses the membrane as a helical span at residues 307-333 (VFLAGMGLAFLYMTVLGFDCITTGYAY). Cysteine 326 lines the Fe cation pocket. Topologically, residues 334–338 (TQGLS) are extracellular. A helical membrane pass occupies residues 339–366 (GSILSVLMGASAITGIMGTVAFTWLRRK). Residues 367-368 (CG) lie on the Cytoplasmic side of the membrane. Residues 369-391 (LVRTGLFSGLAQLSCLILCVISV) traverse the membrane as a helical segment. Over 392 to 452 (FMPGSPLDLS…EMSTKSVPII (61 aa)) the chain is Extracellular. The helical transmembrane segment at 453–482 (SVSLLFAGVIAARIGLWSFDLTVTQLLQEN) threads the bilayer. Residues 483-487 (VIESE) lie on the Cytoplasmic side of the membrane. The chain crosses the membrane as a helical span at residues 488–512 (RGIINGVQNSMNYLLDLLHFIMVIL). Histidine 506 lines the Fe cation pocket. The Extracellular portion of the chain corresponds to 513–515 (APN). Residues 516–541 (PEAFGLLVLISVSFVAMGHLMYFRFA) traverse the membrane as a helical segment. At 542-570 (QKTLGNQIFVCAPDEKEVTDESQPNTSVV) the chain is on the cytoplasmic side.

The protein belongs to the ferroportin (FP) (TC 2.A.100) family. SLC40A subfamily. Identified in a complex with STOM. Interacts with HAMP; affinity of the peptide hormone HAMP for SLC40A1 increases by 80-fold in the presence of iron and the interaction promotes SLC40A1 ubiquitination and degradation. Part of a complex composed of SLC40A1/ferroportin, TF/transferrin and HEPH/hephaestin that transfers iron from cells to transferrin. Post-translationally, polyubiquitinated by RNF217; leading to proteasomal degradation. Under conditions of high systemic iron levels, both the hormone peptide hepcidin/HAMP and holo(iron bound)-transferrin/TF induce the ubiquitination, internalization and proteasomal degradation of SLC40A1 to control iron release from cells.

The protein resides in the cell membrane. The protein localises to the basolateral cell membrane. It carries out the reaction Fe(2+)(in) = Fe(2+)(out). With respect to regulation, during elevated serum iron levels, liver-derived hepcidin/HAMP negatively regulates cell surface SLC40A1 by inducing its ubiquitination, internalization, and degradation. Indeed, hepcidin/HAMP affinity towards ferroportin/SLC40A1 increases by 80-fold in the presence of iron. Transports Fe(2+) from the inside of a cell to the outside of the cell, playing a key role for maintaining systemic iron homeostasis. Transports iron from intestinal, splenic, hepatic cells, macrophages and erythrocytes into the blood to provide iron to other tissues. Controls therefore dietary iron uptake, iron recycling by macrophages and erythrocytes, and release of iron stores in hepatocytes. When iron is in excess in serum, circulating HAMP/hepcidin levels increase resulting in a degradation of SLC40A1, thus limiting the iron efflux to plasma. The sequence is that of Ferroportin from Rattus norvegicus (Rat).